A 311-amino-acid chain; its full sequence is Meteorin-like protein (311 aa).

Positions 1–13 (MRGAARAAWGRAG) are enriched in low complexity. The segment at 1–24 (MRGAARAAWGRAGQPWPRPPAPGP) is disordered. The N-terminal stretch at 1–45 (MRGAARAAWGRAGQPWPRPPAPGPPPPPLPLLLLLLAGLLGGAGA) is a signal peptide. 5 cysteine pairs are disulfide-bonded: cysteine 52/cysteine 75, cysteine 107/cysteine 143, cysteine 188/cysteine 260, cysteine 191/cysteine 284, and cysteine 201/cysteine 306.

The protein belongs to the meteorin family. As to expression, highly expressed in the skeletal muscle, in subcutaneous adipose tissue, epididymal white adipose tissue depots and heart. Also expressed in brown adipose tissues and kidney.

Its subcellular location is the secreted. Functionally, hormone induced following exercise or cold exposure that promotes energy expenditure. Induced either in the skeletal muscle after exercise or in adipose tissue following cold exposure and is present in the circulation. Able to stimulate energy expenditure associated with the browning of the white fat depots and improves glucose tolerance. Does not promote an increase in a thermogenic gene program via direct action on adipocytes, but acts by stimulating several immune cell subtypes to enter the adipose tissue and activate their prothermogenic actions. Stimulates an eosinophil-dependent increase in IL4 expression and promotes alternative activation of adipose tissue macrophages, which are required for the increased expression of the thermogenic and anti-inflammatory gene programs in fat. Required for some cold-induced thermogenic responses, suggesting a role in metabolic adaptations to cold temperatures. In Homo sapiens (Human), this protein is Meteorin-like protein (METRNL).